Consider the following 664-residue polypeptide: Acid beta-fructofuranosidase 4, vacuolar (664 aa).

Topologically, residues 1-43 (MASSDALLPISAREEEPLCPYTRLPMADPNQETHGPRRRRPFK) are cytoplasmic. The propeptide at 1 to 108 (MASSDALLPI…WKLSGDRNTP (108 aa)) is removed in mature form. Short sequence motifs (critical for endoplasmic reticulum export) lie at residues 7–8 (LL) and 9–10 (PI). A Critical for trafficking from the trans-Golgi network to the prevacuolar compartment and from the prevacuolar compartment to the central vacuole motif is present at residues 14-16 (EEE). A helical; Signal-anchor for type II membrane protein transmembrane segment spans residues 44 to 64 (GLLAVSFGLLFIAFYVALIAT). At 65–664 (HDGSRSNDEG…DEAVRALSRT (600 aa)) the chain is on the lumenal side. Asparagine 113 carries N-linked (GlcNAc...) asparagine glycosylation. Substrate-binding positions include 132–135 (WMND), glutamine 151, tryptophan 159, 194–195 (WT), and 258–259 (RD). Aspartate 135 is an active-site residue. An N-linked (GlcNAc...) (complex) asparagine glycan is attached at asparagine 280. Residues glutamate 313 and aspartate 346 each contribute to the substrate site. N-linked (GlcNAc...) asparagine glycosylation is found at asparagine 362 and asparagine 498. A disulfide bridge links cysteine 510 with cysteine 558.

This sequence belongs to the glycosyl hydrolase 32 family. May be present in two forms, a 70 kDa monomer and a heterodimer of the 30 kDa and 38 kDa subunits. The ratio of the levels of the two forms within cells appears to be regulated developmentally. In terms of tissue distribution, mostly expressed in stems, roots and flowers, and, to a lower extent, in mature leaves.

It is found in the vacuole. Its subcellular location is the endoplasmic reticulum membrane. The protein localises to the golgi apparatus membrane. It localises to the golgi apparatus. The protein resides in the trans-Golgi network membrane. It is found in the prevacuolar compartment membrane. Its subcellular location is the vacuole membrane. The protein localises to the vacuole lumen. It carries out the reaction Hydrolysis of terminal non-reducing beta-D-fructofuranoside residues in beta-D-fructofuranosides.. It participates in glycan biosynthesis; sucrose metabolism. Its activity is regulated as follows. Inhibited by C/VIF1 and C/VIF2. Possible role in the continued mobilization of sucrose to sink organs. Regulates root elongation. The protein is Acid beta-fructofuranosidase 4, vacuolar of Arabidopsis thaliana (Mouse-ear cress).